A 240-amino-acid chain; its full sequence is Protein Thf1 (240 aa).

A coiled-coil region spans residues 186-222 (KDLDLYRSNLEKVDQLLKVLEDAAEAERKKKEKQAAS). The interval 212–240 (ERKKKEKQAASTTPAIEEAPVTTAESSES) is disordered.

Belongs to the THF1 family.

In terms of biological role, may be involved in photosynthetic membrane biogenesis. This Synechocystis sp. (strain ATCC 27184 / PCC 6803 / Kazusa) protein is Protein Thf1.